The sequence spans 83 residues: MKASMFLALAGLVLLFVVGYASESEEKEFPIELLSKIFAVDVFKGEERGCKGFGDSCAPGKNECCPNHACSNKHKWCKVYLGK.

The signal sequence occupies residues 1–21 (MKASMFLALAGLVLLFVVGYA). Residues 22-48 (SESEEKEFPIELLSKIFAVDVFKGEER) constitute a propeptide that is removed on maturation. 3 cysteine pairs are disulfide-bonded: C50/C65, C57/C70, and C64/C77. L81 is modified (leucine amide).

This sequence belongs to the neurotoxin 10 (Hwtx-1) family. 15 (Hntx-3) subfamily. In terms of assembly, monomer. As to expression, expressed by the venom gland.

Its subcellular location is the secreted. Functionally, lethal neurotoxin. Selectively blocks tetrodotoxin-sensitive voltage-gated sodium channels (Nav). Does not affect tetrodotoxin-resistant voltage-gated sodium channels or calcium channels. This is Mu-theraphotoxin-Hhn2c from Cyriopagopus hainanus (Chinese bird spider).